The following is a 246-amino-acid chain: NH(3)-dependent NAD(+) synthetase (246 aa).

ATP is bound at residue 29-36 (GLSGGIDS). Residue D35 coordinates Mg(2+). Residue R110 coordinates deamido-NAD(+). Residue T130 participates in ATP binding. Residue E135 coordinates Mg(2+). K159 and S181 together coordinate ATP.

Belongs to the NAD synthetase family. As to quaternary structure, homodimer.

The catalysed reaction is deamido-NAD(+) + NH4(+) + ATP = AMP + diphosphate + NAD(+) + H(+). It functions in the pathway cofactor biosynthesis; NAD(+) biosynthesis; NAD(+) from deamido-NAD(+) (ammonia route): step 1/1. Catalyzes the ATP-dependent amidation of deamido-NAD to form NAD. Uses ammonia as a nitrogen source. In Campylobacter jejuni subsp. jejuni serotype O:6 (strain 81116 / NCTC 11828), this protein is NH(3)-dependent NAD(+) synthetase.